The primary structure comprises 326 residues: Myeloid protein 1 (326 aa).

An N-terminal signal peptide occupies residues 1–18 (MPALSLIALLSLVSTAFA). Repeat copies occupy residues 28–162 (QQGR…SDPT) and 177–312 (QQDA…SDPT). 3 disulfides stabilise this stretch: Cys37/Cys74, Cys48/Cys53, and Cys113/Cys156. The Zn(2+) site is built by His67, Asp71, and His152. The disordered stretch occupies residues 307-326 (DRSDPTSNLERGKGESEMEV).

This sequence belongs to the LECT2/MIM-1 family. In terms of processing, substrate for arginine-specific ADP-ribosyltransferase.

Its subcellular location is the cytoplasmic granule. In Gallus gallus (Chicken), this protein is Myeloid protein 1 (MIM1).